Here is a 141-residue protein sequence, read N- to C-terminus: Large ribosomal subunit protein uL11 (141 aa).

Belongs to the universal ribosomal protein uL11 family. As to quaternary structure, part of the ribosomal stalk of the 50S ribosomal subunit. Interacts with L10 and the large rRNA to form the base of the stalk. L10 forms an elongated spine to which L12 dimers bind in a sequential fashion forming a multimeric L10(L12)X complex. Post-translationally, one or more lysine residues are methylated.

In terms of biological role, forms part of the ribosomal stalk which helps the ribosome interact with GTP-bound translation factors. In Ruegeria pomeroyi (strain ATCC 700808 / DSM 15171 / DSS-3) (Silicibacter pomeroyi), this protein is Large ribosomal subunit protein uL11.